The primary structure comprises 283 residues: MSLDNTWFTEIHQDTAFSLRMKEKLHEEQTPFQKIEIYETEGFGTLMVIDGCVMLTDRDNFIYHEMMSHPVLYSHSDPKNVLIIGGGDCGTLREVLKHPEVKSATQVDIDERVTRLAEKYFPELCDSNDDPRAKLLFDDGIKYVQDAAPGSLDVIIIDSTDPVGPAEGLFSTAFYRDCIKALGPGGLLVQQSESPLLHTDSIIKPMHDSLRAAGFLDTLALHFPQCSYPSGWWTATMACKDMPVTFLREAQAEDKPFETHYYNAAIQRAAIACPEFFRKKLYG.

Residues 5–240 (NTWFTEIHQD…GWWTATMACK (236 aa)) form the PABS domain. Q33 is an S-methyl-5'-thioadenosine binding site. The spermidine site is built by H64 and D88. S-methyl-5'-thioadenosine contacts are provided by residues D108 and 139 to 140 (DG). Residue D158 is the Proton acceptor of the active site. 158 to 161 (DSTD) provides a ligand contact to spermidine. Residue P165 participates in S-methyl-5'-thioadenosine binding.

Belongs to the spermidine/spermine synthase family. Homodimer or homotetramer.

It is found in the cytoplasm. It catalyses the reaction S-adenosyl 3-(methylsulfanyl)propylamine + putrescine = S-methyl-5'-thioadenosine + spermidine + H(+). It participates in amine and polyamine biosynthesis; spermidine biosynthesis; spermidine from putrescine: step 1/1. In terms of biological role, catalyzes the irreversible transfer of a propylamine group from the amino donor S-adenosylmethioninamine (decarboxy-AdoMet) to putrescine (1,4-diaminobutane) to yield spermidine. The sequence is that of Polyamine aminopropyltransferase from Thioalkalivibrio sulfidiphilus (strain HL-EbGR7).